The primary structure comprises 1023 residues: Sodium/potassium-transporting ATPase subunit alpha-1 (1023 aa).

A propeptide spanning residues 1–5 is cleaved from the precursor; sequence MGKGV. Positions 1 to 11 are enriched in basic and acidic residues; the sequence is MGKGVGRDKYE. Positions 1-38 are disordered; sequence MGKGVGRDKYEPAAVSEHGDKKGKKAKKERDMDELKKE. Residues 6–87 are Cytoplasmic-facing; sequence GRDKYEPAAV…NALTPPPTTP (82 aa). Lys-9 carries the N6-acetyllysine modification. Tyr-10 is subject to Phosphotyrosine. A Phosphoserine; by PKC modification is found at Ser-16. Lys-21 is modified (N6-acetyllysine). Residues 28–38 show a composition bias toward basic and acidic residues; it reads KERDMDELKKE. Phosphoserine occurs at positions 40 and 47. Positions 82-84 are phosphoinositide-3 kinase binding; sequence PPP. The helical transmembrane segment at 88-108 threads the bilayer; sequence EWVKFCRQLFGGFSMLLWIGA. The Extracellular segment spans residues 109 to 131; it reads ILCFLAYGILAATEEDFDNDNLY. A helical transmembrane segment spans residues 132-152; that stretch reads LGVVLAAVVIITGCFSYYQEA. The Cytoplasmic segment spans residues 153-288; the sequence is KSSKIMESFK…GGQTPIAAEI (136 aa). The segment at 216–235 is disordered; it reads SSLTGESEPQTRSPDFTNEN. Residue Ser-228 is modified to Phosphoserine. Position 260 is a phosphotyrosine (Tyr-260). The chain crosses the membrane as a helical span at residues 289–308; the sequence is EHFIHIITGVAVFLGVSFFI. Residues 309 to 320 lie on the Extracellular side of the membrane; sequence LSLILEYTWLEA. Residues 321-338 traverse the membrane as a helical segment; it reads VIFLIGIIVANVPEGLLA. Residues 339–772 are Cytoplasmic-facing; it reads TVTVCLTLTA…EEGRLIFDNL (434 aa). The active-site 4-aspartylphosphate intermediate is Asp-376. Ser-452 and Ser-484 each carry phosphoserine. Lys-487 lines the ATP pocket. At Tyr-542 the chain carries Phosphotyrosine. Residues 596–717 are mediates interaction with SCN7A; that stretch reads RAAVPDAVGK…QGAIVAVTGD (122 aa). Lys-661 bears the N6-succinyllysine mark. Phosphoserine occurs at positions 668 and 675. Residues Asp-717 and Asp-721 each contribute to the Mg(2+) site. Residues 773–792 form a helical membrane-spanning segment; that stretch reads KKSIAYTLTSNIPEITPFLI. The Extracellular portion of the chain corresponds to 793–802; the sequence is FIIANIPLPL. The helical transmembrane segment at 803 to 823 threads the bilayer; sequence GTVTILCIDLGTDMVPAISLA. Over 824–843 the chain is Cytoplasmic; sequence YEQAESDIMKRQPRNPKTDK. Residues 844–866 traverse the membrane as a helical segment; sequence LVNERLISMAYGQIGMIQALGGF. Residues 867-918 are Extracellular-facing; it reads FTYFVILAENGFLPFHLLGIRVDWDDRWINDVEDSYGQQWTYEQRKIVEFTC. Residues 919-938 traverse the membrane as a helical segment; that stretch reads HTAFFVSIVVVQWADLVICK. At 939 to 951 the chain is on the cytoplasmic side; it reads TRRNSVFQQGMKN. Position 943 is a phosphoserine; by PKA (Ser-943). The helical transmembrane segment at 952 to 970 threads the bilayer; sequence KILIFGLFEETALAAFLSY. Over 971-985 the chain is Extracellular; the sequence is CPGMGVALRMYPLKP. The helical transmembrane segment at 986 to 1006 threads the bilayer; the sequence is TWWFCAFPYSLLIFVYDEIRK. At 1007 to 1023 the chain is on the cytoplasmic side; it reads LIIRRRPGGWVEKETYY.

It belongs to the cation transport ATPase (P-type) (TC 3.A.3) family. Type IIC subfamily. In terms of assembly, the sodium/potassium-transporting ATPase is composed of a catalytic alpha subunit, an auxiliary non-catalytic beta subunit and an additional regulatory subunit. Interacts with regulatory subunit FXYD1. Interacts with regulatory subunit FXYD3. Interacts with SIK1. Interacts with SLC35G1 and STIM1. Interacts with CLN3; this interaction regulates the sodium/potassium-transporting ATPase complex localization at the plasma membrane. Interacts with SCN7A; activates ATP1A1 P-type sodium:potassium-exchanging transporter activity which indirectly signals to nearby neurons to regulate sodium homeostasis. In terms of processing, phosphorylation on Tyr-10 modulates pumping activity. Phosphorylation of Ser-943 by PKA modulates the response of ATP1A1 to PKC. Dephosphorylation by protein phosphatase 2A (PP2A) following increases in intracellular sodium, leading to increase catalytic activity. As to expression, expressed in endocardial endothelial cells.

It is found in the cell membrane. It localises to the basolateral cell membrane. The protein localises to the sarcolemma. The protein resides in the cell projection. Its subcellular location is the axon. It is found in the melanosome. The enzyme catalyses K(+)(out) + Na(+)(in) + ATP + H2O = K(+)(in) + Na(+)(out) + ADP + phosphate + H(+). Its function is as follows. This is the catalytic component of the active enzyme, which catalyzes the hydrolysis of ATP coupled with the exchange of sodium and potassium ions across the plasma membrane. This action creates the electrochemical gradient of sodium and potassium ions, providing the energy for active transport of various nutrients. Could also be part of an osmosensory signaling pathway that senses body-fluid sodium levels and controls salt intake behavior as well as voluntary water intake to regulate sodium homeostasis. In Oryctolagus cuniculus (Rabbit), this protein is Sodium/potassium-transporting ATPase subunit alpha-1 (ATP1A1).